Consider the following 511-residue polypeptide: Ent-copalyl diphosphate synthase (511 aa).

A divalent metal cation contacts are provided by aspartate 291 and aspartate 293. Positions 291–294 (DSDD) match the DXDD motif motif.

Belongs to the terpene synthase family. In terms of assembly, homodimer. A divalent metal cation serves as cofactor.

It catalyses the reaction (2E,6E,10E)-geranylgeranyl diphosphate = ent-copalyl diphosphate. The protein operates within antibiotic biosynthesis. Involved in viguiepinol biosynthesis. Catalyzes the conversion of geranylgeranyl diphosphate (GGDP) into copalyl diphosphate (ent-CDP). This Streptomyces sp. (strain KO-3988) protein is Ent-copalyl diphosphate synthase.